The chain runs to 615 residues: MEQNPQSQLKLLVTRGKEQGYLTYAEVNDHLPEDIVDSDQIEDIIQMINDMGIQVMEEAPDADDLLLAENTTSTDEDAEEAAAQVLSSVESEIGRTTDPVRMYMREMGTVELLTREGEIDIAKRIEDGINQVQCSVAEYPEAITYLLEQYDRVEAEEARLSDLITGFVDPNAEEEMAPTATHVGSELSQEDLDDDEDEDEEDGDDDAADDDNSIDPELAREKFAELRAQYVVTRDTIKAKGRSHAAAQEEILKLSEVFKQFRLVPKQFDYLVNSMRVMMDRVRTQERLIMKLCVEQCKMPKKNFITLFTGNETSETWFNAAIAMNKPWSEKLHDVAEEVQRCLQKLRQIEEETGLTIEQVKDINRRMSIGEAKARRAKKEMVEANLRLVISIAKKYTNRGLQFLDLIQEGNIGLMKAVDKFEYRRGYKFSTYATWWIRQAITRSIADQARTIRIPVHMIETINKLNRISRQMLQEMGREPTPEELAERMLMPEDKIRKVLKIAKEPISMETPIGDDEDSHLGDFIEDTTLELPLDSATTESLRAATHDVLAGLTAREAKVLRMRFGIDMNTDHTLEEVGKQFDVTRERIRQIEAKALRKLRHPSRSEVLRSFLDD.

Residues 177 to 215 form a disordered region; it reads APTATHVGSELSQEDLDDDEDEDEEDGDDDAADDDNSID. Acidic residues predominate over residues 188 to 214; that stretch reads SQEDLDDDEDEDEEDGDDDAADDDNSI. The segment at 381-451 is sigma-70 factor domain-2; the sequence is MVEANLRLVI…TRSIADQART (71 aa). Positions 405–408 match the Interaction with polymerase core subunit RpoC motif; it reads DLIQ. The segment at 460–536 is sigma-70 factor domain-3; it reads ETINKLNRIS…DTTLELPLDS (77 aa). The sigma-70 factor domain-4 stretch occupies residues 549–602; the sequence is VLAGLTAREAKVLRMRFGIDMNTDHTLEEVGKQFDVTRERIRQIEAKALRKLRH. Residues 575 to 594 constitute a DNA-binding region (H-T-H motif); sequence LEEVGKQFDVTRERIRQIEA.

It belongs to the sigma-70 factor family. RpoD/SigA subfamily. Interacts transiently with the RNA polymerase catalytic core.

It localises to the cytoplasm. In terms of biological role, sigma factors are initiation factors that promote the attachment of RNA polymerase to specific initiation sites and are then released. This sigma factor is the primary sigma factor during exponential growth. The protein is RNA polymerase sigma factor RpoD of Salmonella typhi.